The sequence spans 493 residues: Glutamyl-tRNA(Gln) amidotransferase subunit A (493 aa).

Residues Lys81 and Ser156 each act as charge relay system in the active site. The active-site Acyl-ester intermediate is the Ser180.

This sequence belongs to the amidase family. GatA subfamily. Heterotrimer of A, B and C subunits.

It carries out the reaction L-glutamyl-tRNA(Gln) + L-glutamine + ATP + H2O = L-glutaminyl-tRNA(Gln) + L-glutamate + ADP + phosphate + H(+). Allows the formation of correctly charged Gln-tRNA(Gln) through the transamidation of misacylated Glu-tRNA(Gln) in organisms which lack glutaminyl-tRNA synthetase. The reaction takes place in the presence of glutamine and ATP through an activated gamma-phospho-Glu-tRNA(Gln). The polypeptide is Glutamyl-tRNA(Gln) amidotransferase subunit A (Mycobacterium ulcerans (strain Agy99)).